Here is a 121-residue protein sequence, read N- to C-terminus: Small ribosomal subunit protein uS13 (121 aa).

The segment at arginine 93–lysine 121 is disordered.

The protein belongs to the universal ribosomal protein uS13 family. Part of the 30S ribosomal subunit. Forms a loose heterodimer with protein S19. Forms two bridges to the 50S subunit in the 70S ribosome.

Located at the top of the head of the 30S subunit, it contacts several helices of the 16S rRNA. In the 70S ribosome it contacts the 23S rRNA (bridge B1a) and protein L5 of the 50S subunit (bridge B1b), connecting the 2 subunits; these bridges are implicated in subunit movement. Contacts the tRNAs in the A and P-sites. This is Small ribosomal subunit protein uS13 from Variovorax paradoxus (strain S110).